Consider the following 176-residue polypeptide: Ribosome maturation factor RimM (176 aa).

One can recognise a PRC barrel domain in the interval 101–170; the sequence is EGEYFESDLI…RITVELPEGL (70 aa).

This sequence belongs to the RimM family. As to quaternary structure, binds ribosomal protein uS19.

The protein resides in the cytoplasm. Functionally, an accessory protein needed during the final step in the assembly of 30S ribosomal subunit, possibly for assembly of the head region. Essential for efficient processing of 16S rRNA. May be needed both before and after RbfA during the maturation of 16S rRNA. It has affinity for free ribosomal 30S subunits but not for 70S ribosomes. The polypeptide is Ribosome maturation factor RimM (Solibacter usitatus (strain Ellin6076)).